The primary structure comprises 341 residues: Heat-inducible transcription repressor HrcA (341 aa).

Belongs to the HrcA family.

Negative regulator of class I heat shock genes (grpE-dnaK-dnaJ and groELS operons). Prevents heat-shock induction of these operons. The sequence is that of Heat-inducible transcription repressor HrcA from Carboxydothermus hydrogenoformans (strain ATCC BAA-161 / DSM 6008 / Z-2901).